A 481-amino-acid polypeptide reads, in one-letter code: uncharacterized protein (481 aa).

13 consecutive transmembrane segments (helical) span residues 3 to 23 (YLPMMIVFPLIMAIIMNLLHG), 33 to 53 (FITAAILIILPFISQYGYYYF), 75 to 95 (QAIIVTLSLIASLVLITGMGE), 99 to 119 (NNMFVTLSLMGFASIAAIVLA), 122 to 142 (IFNLYVFFEIVSIVQAGLVFL), 155 to 175 (YMIMGNVAAALMLLGIAFLLA), 196 to 216 (IYGGLLLLIVGLAYGAGLPPF), 241 to 261 (FVLVGLMIIILKLFNGLDYFA), 264 to 284 (HAVLIALGVLAMVFGVVMALL), 303 to 323 (VATGLALGTPLGIVAGIFHAI), 351 to 371 (GGLLPLMPSVAFMVLCAKLAI), 400 to 420 (IIMIIVSIGTFVSMMKAFYLI), and 443 to 463 (VFSLFVLTALCIIIGLYPDIV).

It is found in the cell membrane. This is an uncharacterized protein from Methanocaldococcus jannaschii (strain ATCC 43067 / DSM 2661 / JAL-1 / JCM 10045 / NBRC 100440) (Methanococcus jannaschii).